A 235-amino-acid polypeptide reads, in one-letter code: Small ribosomal subunit protein eS4 (235 aa).

The S4 RNA-binding domain occupies Val-38–Asn-99.

This sequence belongs to the eukaryotic ribosomal protein eS4 family.

The polypeptide is Small ribosomal subunit protein eS4 (rps4e) (Thermoplasma volcanium (strain ATCC 51530 / DSM 4299 / JCM 9571 / NBRC 15438 / GSS1)).